The sequence spans 630 residues: uncharacterized protein (630 aa).

The next 4 membrane-spanning stretches (helical) occupy residues Met254–Val274, Ile504–Ile524, Met564–Phe584, and Ile601–Phe621.

It is found in the cell membrane. This is an uncharacterized protein from Mycoplasma genitalium (strain ATCC 33530 / DSM 19775 / NCTC 10195 / G37) (Mycoplasmoides genitalium).